The following is a 144-amino-acid chain: Large ribosomal subunit protein uL16 (144 aa).

Positions 1 to 19 (MLLPKRVKYRRQHRPKTTG) are enriched in basic residues. A disordered region spans residues 1–23 (MLLPKRVKYRRQHRPKTTGRSKG).

It belongs to the universal ribosomal protein uL16 family. In terms of assembly, part of the 50S ribosomal subunit.

Binds 23S rRNA and is also seen to make contacts with the A and possibly P site tRNAs. This Staphylococcus aureus (strain Mu50 / ATCC 700699) protein is Large ribosomal subunit protein uL16.